Here is a 504-residue protein sequence, read N- to C-terminus: Anaerobic nitric oxide reductase transcription regulator NorR (504 aa).

Asp-57 bears the 4-aspartylphosphate mark. Residues 187-416 (MIGLSPGMTQ…LEHAIHRAVV (230 aa)) enclose the Sigma-54 factor interaction domain. ATP contacts are provided by residues 215-222 (GETGTGKE) and 278-287 (ADNGTLFLDE). Residues 479–498 (WAACARMLETDVANLHRLAK) constitute a DNA-binding region (H-T-H motif).

It participates in nitrogen metabolism; nitric oxide reduction. In terms of biological role, required for the expression of anaerobic nitric oxide (NO) reductase, acts as a transcriptional activator for at least the norVW operon. Activation also requires sigma-54. The polypeptide is Anaerobic nitric oxide reductase transcription regulator NorR (Escherichia coli (strain 55989 / EAEC)).